A 312-amino-acid chain; its full sequence is 4-hydroxy-3-methylbut-2-enyl diphosphate reductase (312 aa).

C15 provides a ligand contact to [4Fe-4S] cluster. 2 residues coordinate (2E)-4-hydroxy-3-methylbut-2-enyl diphosphate: H44 and H77. H44 and H77 together coordinate dimethylallyl diphosphate. Residues H44 and H77 each contribute to the isopentenyl diphosphate site. C99 lines the [4Fe-4S] cluster pocket. H127 contacts (2E)-4-hydroxy-3-methylbut-2-enyl diphosphate. H127 is a dimethylallyl diphosphate binding site. Isopentenyl diphosphate is bound at residue H127. The active-site Proton donor is the E129. Position 167 (T167) interacts with (2E)-4-hydroxy-3-methylbut-2-enyl diphosphate. C197 provides a ligand contact to [4Fe-4S] cluster. Positions 225, 226, 227, and 269 each coordinate (2E)-4-hydroxy-3-methylbut-2-enyl diphosphate. Residues S225, S226, N227, and S269 each coordinate dimethylallyl diphosphate. Isopentenyl diphosphate is bound by residues S225, S226, N227, and S269.

Belongs to the IspH family. It depends on [4Fe-4S] cluster as a cofactor.

It catalyses the reaction isopentenyl diphosphate + 2 oxidized [2Fe-2S]-[ferredoxin] + H2O = (2E)-4-hydroxy-3-methylbut-2-enyl diphosphate + 2 reduced [2Fe-2S]-[ferredoxin] + 2 H(+). The enzyme catalyses dimethylallyl diphosphate + 2 oxidized [2Fe-2S]-[ferredoxin] + H2O = (2E)-4-hydroxy-3-methylbut-2-enyl diphosphate + 2 reduced [2Fe-2S]-[ferredoxin] + 2 H(+). It participates in isoprenoid biosynthesis; dimethylallyl diphosphate biosynthesis; dimethylallyl diphosphate from (2E)-4-hydroxy-3-methylbutenyl diphosphate: step 1/1. Its pathway is isoprenoid biosynthesis; isopentenyl diphosphate biosynthesis via DXP pathway; isopentenyl diphosphate from 1-deoxy-D-xylulose 5-phosphate: step 6/6. Its function is as follows. Catalyzes the conversion of 1-hydroxy-2-methyl-2-(E)-butenyl 4-diphosphate (HMBPP) into a mixture of isopentenyl diphosphate (IPP) and dimethylallyl diphosphate (DMAPP). Acts in the terminal step of the DOXP/MEP pathway for isoprenoid precursor biosynthesis. This Aromatoleum aromaticum (strain DSM 19018 / LMG 30748 / EbN1) (Azoarcus sp. (strain EbN1)) protein is 4-hydroxy-3-methylbut-2-enyl diphosphate reductase.